The primary structure comprises 181 residues: TATA-box-binding protein (181 aa).

2 tandem repeats follow at residues 7-83 (IVNV…IKEL) and 98-173 (VQNM…SKTL).

This sequence belongs to the TBP family.

Functionally, general factor that plays a role in the activation of archaeal genes transcribed by RNA polymerase. Binds specifically to the TATA box promoter element which lies close to the position of transcription initiation. The protein is TATA-box-binding protein of Methanococcus maripaludis (strain C6 / ATCC BAA-1332).